The chain runs to 242 residues: Flavin prenyltransferase PAD1, mitochondrial (242 aa).

The transit peptide at 1–58 directs the protein to the mitochondrion; it reads MLLFPRRTNIAFFKTTGIFANFPLLGRTITTSPSFLTHKLSKEVTRASTSPPRPKRIV. FMN contacts are provided by residues 63–65, serine 89, 140–143, and arginine 175; these read GAT and SMKS. Dimethylallyl phosphate contacts are provided by tyrosine 205 and arginine 221.

This sequence belongs to the UbiX/PAD1 family. As to quaternary structure, oligomer.

The protein localises to the mitochondrion. The catalysed reaction is dimethylallyl phosphate + FMNH2 = prenylated FMNH2 + phosphate. Functionally, flavin prenyltransferase that catalyzes the synthesis of the prenylated FMN cofactor (prenyl-FMN) for the ferulic acid decarboxylase FDC1/ubiD. The prenyltransferase is metal-independent and links a dimethylallyl moiety from dimethylallyl monophosphate (DMAP) to the flavin N5 and C6 atoms of FMN. Involved in the decarboxylation of phenylacrylic acids like ferulic acid, p-coumaric acid or cinnamic acid, producing the corresponding vinyl derivatives which play the role of aroma metabolites. Also involved in the degradation of the food preservative sorbic acid (2,4-hexadienoic acid) to a volatile hydrocarbon, 1,3-pentadiene. Not essential for ubiquinone synthesis. Can rescue Q biosynthesis in E.coli strains lacking UbiX. Has mRNA binding activity. In Saccharomyces cerevisiae (strain ATCC 204508 / S288c) (Baker's yeast), this protein is Flavin prenyltransferase PAD1, mitochondrial.